The primary structure comprises 147 residues: Small ribosomal subunit protein uS12 (147 aa).

It belongs to the universal ribosomal protein uS12 family. In terms of assembly, part of the 30S ribosomal subunit.

In terms of biological role, with S4 and S5 plays an important role in translational accuracy. Located at the interface of the 30S and 50S subunits. The protein is Small ribosomal subunit protein uS12 of Saccharolobus solfataricus (strain ATCC 35092 / DSM 1617 / JCM 11322 / P2) (Sulfolobus solfataricus).